A 38-amino-acid polypeptide reads, in one-letter code: uncharacterized protein (38 aa).

Residues 10-32 traverse the membrane as a helical segment; the sequence is FSLLWYFLVGGGKGEVCWRFLGI.

The protein resides in the membrane. This is an uncharacterized protein from Saccharomyces cerevisiae (strain ATCC 204508 / S288c) (Baker's yeast).